The sequence spans 259 residues: Exosome complex component Rrp42 (259 aa).

It belongs to the RNase PH family. Rrp42 subfamily. As to quaternary structure, component of the archaeal exosome complex. Forms a hexameric ring-like arrangement composed of 3 Rrp41-Rrp42 heterodimers. The hexameric ring associates with a trimer of Rrp4 and/or Csl4 subunits.

Its subcellular location is the cytoplasm. In terms of biological role, non-catalytic component of the exosome, which is a complex involved in RNA degradation. Contributes to the structuring of the Rrp41 active site. The protein is Exosome complex component Rrp42 of Archaeoglobus fulgidus (strain ATCC 49558 / DSM 4304 / JCM 9628 / NBRC 100126 / VC-16).